Reading from the N-terminus, the 266-residue chain is Aliphatic sulfonates import ATP-binding protein SsuB (266 aa).

Positions 23-244 constitute an ABC transporter domain; that stretch reads LALDAITKHY…RRGSAKLAEL (222 aa). ATP is bound at residue 55 to 62; the sequence is GRSGCGKS.

The protein belongs to the ABC transporter superfamily. Aliphatic sulfonates importer (TC 3.A.1.17.2) family. In terms of assembly, the complex is composed of two ATP-binding proteins (SsuB), two transmembrane proteins (SsuC) and a solute-binding protein (SsuA).

It localises to the cell inner membrane. The enzyme catalyses ATP + H2O + aliphatic sulfonate-[sulfonate-binding protein]Side 1 = ADP + phosphate + aliphatic sulfonateSide 2 + [sulfonate-binding protein]Side 1.. Its function is as follows. Part of the ABC transporter complex SsuABC involved in aliphatic sulfonates import. Responsible for energy coupling to the transport system. This Pectobacterium atrosepticum (strain SCRI 1043 / ATCC BAA-672) (Erwinia carotovora subsp. atroseptica) protein is Aliphatic sulfonates import ATP-binding protein SsuB.